Here is a 103-residue protein sequence, read N- to C-terminus: Large ribosomal subunit protein bL21 (103 aa).

The protein belongs to the bacterial ribosomal protein bL21 family. As to quaternary structure, part of the 50S ribosomal subunit. Contacts protein L20.

In terms of biological role, this protein binds to 23S rRNA in the presence of protein L20. The protein is Large ribosomal subunit protein bL21 of Marinobacter nauticus (strain ATCC 700491 / DSM 11845 / VT8) (Marinobacter aquaeolei).